A 265-amino-acid polypeptide reads, in one-letter code: Ni-sirohydrochlorin a,c-diamide reductive cyclase complex, component CfbC (265 aa).

It belongs to the NifH/BchL/ChlL family. As to quaternary structure, homodimer. The Ni-sirohydrochlorin a,c-diamide reductive cyclase complex is composed of a NifH homolog component CfbC and a NifD homolog component CfbD. [4Fe-4S] cluster serves as cofactor.

The catalysed reaction is Ni-sirohydrochlorin a,c-diamide + 3 AH2 + ATP + H2O = 15,17(3)-seco-F430-17(3)-acid + 3 A + ADP + phosphate. In terms of biological role, involved in the biosynthesis of the unique nickel-containing tetrapyrrole coenzyme F430, the prosthetic group of methyl-coenzyme M reductase (MCR), which plays a key role in methanogenesis and anaerobic methane oxidation. Catalyzes both the six-electron reduction of the tetrahydroporphyrin ring system and the gamma-lactamization of the c-acetamide side chain of Ni-sirohydrochlorin a,c-diamide to yield 15,17(3)-seco-F430-17(3)-acid (seco-F430), the last intermediate in the biosynthesis of the coenzyme F430. In Methanosarcina barkeri (strain Fusaro / DSM 804), this protein is Ni-sirohydrochlorin a,c-diamide reductive cyclase complex, component CfbC.